Reading from the N-terminus, the 443-residue chain is Aspartic protease PEP3 (443 aa).

Residues 1-36 (MQNRPRVFDSAMNLSPNMHFLSLMPGLLLLSLQVHT) form the signal peptide. The propeptide at 37–107 (SPTPLKKTIR…NTVSKAMQAN (71 aa)) is activation peptide. In terms of domain architecture, Peptidase A1 spans 123 to 440 (YLSPVTIGGQ…DLRGPSLHVA (318 aa)). The active site involves aspartate 139. Residues asparagine 180 and asparagine 293 are each glycosylated (N-linked (GlcNAc...) asparagine). Residue aspartate 327 is part of the active site. Cysteines 363 and 403 form a disulfide. N-linked (GlcNAc...) asparagine glycans are attached at residues asparagine 364 and asparagine 388.

Belongs to the peptidase A1 family. As to quaternary structure, monomer.

It localises to the secreted. Its function is as follows. Secreted aspartic endopeptidase that allows assimilation of proteinaceous substrates. The scissile peptide bond is attacked by a nucleophilic water molecule activated by two aspartic residues in the active site. Shows a broad primary substrate specificity. Favors hydrophobic residues at the P1 and P1' positions. This chain is Aspartic protease PEP3, found in Coccidioides posadasii (strain C735) (Valley fever fungus).